A 560-amino-acid chain; its full sequence is Hypermethylated in cancer 2 protein (560 aa).

The region spanning 24–87 (CDVIIVVENA…IYTGKLLSSD (64 aa)) is the BTB domain. Disordered regions lie at residues 122–163 (RSLL…KTKR) and 183–367 (HCTT…GGRN). Composition is skewed to polar residues over residues 126–153 (NKPTTPTNGRTSRNQRLSSTPVTPNQMS) and 183–203 (HCTTSNSLSPSTSKNGSNGSC). The segment covering 224–242 (EEVSPSSIPQESPQSASES) has biased composition (low complexity). Positions 243–259 (TANSASFDENPNTQNLT) are enriched in polar residues. The segment covering 296 to 308 (PKSEGKKGEDMER) has biased composition (basic and acidic residues). Positions 348–362 (ENGQEQSEESGQSEN) are enriched in low complexity. C2H2-type zinc fingers lie at residues 387–409 (YVCIPCGKGFPSSEELNAHVETH), 450–472 (FSCSVCNKSYKDPATLRQHEKTH), 478–500 (FPCNICGKMFTQRGTMTRHMRSH), 506–528 (FACEECGMRFTRQYRLTEHMRVH), and 534–556 (YECQLCGGKFTQQRNLISHLRMH).

Belongs to the krueppel C2H2-type zinc-finger protein family. Hic subfamily.

The protein resides in the nucleus. Its function is as follows. Transcriptional repressor. The sequence is that of Hypermethylated in cancer 2 protein (hic2) from Danio rerio (Zebrafish).